Consider the following 97-residue polypeptide: Aspartyl/glutamyl-tRNA(Asn/Gln) amidotransferase subunit C (97 aa).

This sequence belongs to the GatC family. As to quaternary structure, heterotrimer of A, B and C subunits.

It carries out the reaction L-glutamyl-tRNA(Gln) + L-glutamine + ATP + H2O = L-glutaminyl-tRNA(Gln) + L-glutamate + ADP + phosphate + H(+). It catalyses the reaction L-aspartyl-tRNA(Asn) + L-glutamine + ATP + H2O = L-asparaginyl-tRNA(Asn) + L-glutamate + ADP + phosphate + 2 H(+). Functionally, allows the formation of correctly charged Asn-tRNA(Asn) or Gln-tRNA(Gln) through the transamidation of misacylated Asp-tRNA(Asn) or Glu-tRNA(Gln) in organisms which lack either or both of asparaginyl-tRNA or glutaminyl-tRNA synthetases. The reaction takes place in the presence of glutamine and ATP through an activated phospho-Asp-tRNA(Asn) or phospho-Glu-tRNA(Gln). This is Aspartyl/glutamyl-tRNA(Asn/Gln) amidotransferase subunit C from Prochlorococcus marinus subsp. pastoris (strain CCMP1986 / NIES-2087 / MED4).